We begin with the raw amino-acid sequence, 747 residues long: Endoglucanase C (747 aa).

The first 37 residues, methionine 1–alanine 37, serve as a signal peptide directing secretion. The CBM2 domain occupies glycine 38–glycine 136. Cystine bridges form between cysteine 39-cysteine 133, cysteine 183-cysteine 214, and cysteine 193-cysteine 208. The CBM10 domain maps to glutamine 182–proline 211. A disordered region spans residues glycine 226 to threonine 283. Positions serine 227–proline 281 are enriched in low complexity. The interval valine 280 to leucine 747 is catalytic. Glutamate 502 functions as the Proton donor in the catalytic mechanism. The active-site Nucleophile is the glutamate 652.

It belongs to the glycosyl hydrolase 5 (cellulase A) family.

It carries out the reaction Endohydrolysis of (1-&gt;4)-beta-D-glucosidic linkages in cellulose, lichenin and cereal beta-D-glucans.. This Cellvibrio japonicus (strain Ueda107) (Pseudomonas fluorescens subsp. cellulosa) protein is Endoglucanase C (celC).